A 412-amino-acid polypeptide reads, in one-letter code: cAMP-dependent protein kinase regulatory subunit (412 aa).

Residues 1–11 are compositionally biased toward polar residues; it reads MSNYSHSSNNP. Residues 1-146 are disordered; the sequence is MSNYSHSSNN…TPPSHPKSEE (146 aa). The segment covering 16-29 has biased composition (basic and acidic residues); sequence STKEDKPSSFHKIA. Positions 23–159 are dimerization and phosphorylation; it reads SSFHKIAEDE…RLKTAVSNNF (137 aa). Composition is skewed to polar residues over residues 49–60 and 119–138; these read NADNSAGGNNPL and TSVS…SWTP. S120 bears the Phosphoserine mark. 3',5'-cyclic AMP-binding positions include 160-291, E238, R247, 292-405, E359, and R368; these read LFSH…EEVP and LLSS…TEYS.

It belongs to the cAMP-dependent kinase regulatory chain family. Tetramer, composed of 2 regulatory (R) and 2 catalytic (C) subunits. In the presence of cAMP it dissociates into 2 active monomeric C subunits and an R dimer.

The chain is cAMP-dependent protein kinase regulatory subunit (pkaR) from Emericella nidulans (strain FGSC A4 / ATCC 38163 / CBS 112.46 / NRRL 194 / M139) (Aspergillus nidulans).